We begin with the raw amino-acid sequence, 621 residues long: (-)-beta-phellandrene synthase 1, chloroplastic (621 aa).

The transit peptide at 1–49 (MALALVSVAPLVSMRRSLFSSPYELKSIDKTIPNLVMCRKRMSGTPSIR) directs the protein to the chloroplast. 3 residues coordinate Mg(2+): D372, D376, and D524. The DDXXD motif signature appears at 372–376 (DDIYD).

It belongs to the terpene synthase family. Tpsd subfamily. Mg(2+) serves as cofactor. Requires Mn(2+) as cofactor.

It localises to the plastid. It is found in the chloroplast. It carries out the reaction (2E)-geranyl diphosphate = (-)-beta-phellandrene + diphosphate. The protein operates within terpene metabolism; oleoresin biosynthesis. It functions in the pathway secondary metabolite biosynthesis; terpenoid biosynthesis. Functionally, monoterpene synthase (TPS) involved in the biosynthesis of monoterpene natural products included in conifer oleoresin secretions and volatile emissions; these compounds contribute to biotic and abiotic stress defense against herbivores and pathogens. Catalyzes the conversion of (2E)-geranyl diphosphate (GPP) to (-)-beta-phellandrene and, to a lower extent, to (-)-alpha-phellandrene. This is (-)-beta-phellandrene synthase 1, chloroplastic from Pinus contorta (Shore pine).